Reading from the N-terminus, the 245-residue chain is MINIGLSGSTGKMGKTILARIDKFKDCKISAKFNSTDDLDDLNNFCKNSDVIIDFSTPEILEKLINYALKHNTKLVIGTTGLQPKHFKLLEKAAKTLPILYSANMSTGANLLSYLAKKATKILDDYDIEILETHHRNKKDSPSGTAIMLAETIAREKGLNIVFNRGNRPRSEKEIGISSLRGGNVHSIHEISLLGDDEIITLKHEALNKNSFVIGAIKSAIWLQDKSPALYSMQDIYNYSLQKQL.

NAD(+) contacts are provided by residues 8 to 13, 78 to 80, and 102 to 105; these read GSTGKM, GTT, and SANM. H134 (proton donor/acceptor) is an active-site residue. H135 is a binding site for (S)-2,3,4,5-tetrahydrodipicolinate. Residue K138 is the Proton donor of the active site. A (S)-2,3,4,5-tetrahydrodipicolinate-binding site is contributed by 144-145; it reads GT.

This sequence belongs to the DapB family.

The protein resides in the cytoplasm. The enzyme catalyses (S)-2,3,4,5-tetrahydrodipicolinate + NAD(+) + H2O = (2S,4S)-4-hydroxy-2,3,4,5-tetrahydrodipicolinate + NADH + H(+). The catalysed reaction is (S)-2,3,4,5-tetrahydrodipicolinate + NADP(+) + H2O = (2S,4S)-4-hydroxy-2,3,4,5-tetrahydrodipicolinate + NADPH + H(+). Its pathway is amino-acid biosynthesis; L-lysine biosynthesis via DAP pathway; (S)-tetrahydrodipicolinate from L-aspartate: step 4/4. Functionally, catalyzes the conversion of 4-hydroxy-tetrahydrodipicolinate (HTPA) to tetrahydrodipicolinate. The chain is 4-hydroxy-tetrahydrodipicolinate reductase from Rickettsia akari (strain Hartford).